The following is a 55-amino-acid chain: A-type ATP synthase subunit G (55 aa).

Has multiple subunits, A(3), B(3), C, D, E, F, G, I and K(x); there may be a few other subunits as well.

Its subcellular location is the cell membrane. Functionally, component of the A-type ATP synthase that produces ATP from ADP in the presence of a proton gradient across the membrane. The polypeptide is A-type ATP synthase subunit G (atpG) (Methanosarcina mazei (strain ATCC BAA-159 / DSM 3647 / Goe1 / Go1 / JCM 11833 / OCM 88) (Methanosarcina frisia)).